Consider the following 51-residue polypeptide: Mitochondrial import receptor subunit TOM5 homolog (51 aa).

M1 is subject to N-acetylmethionine. A Glycyl lysine isopeptide (Lys-Gly) (interchain with G-Cter in SUMO2) cross-link involves residue K10. A helical membrane pass occupies residues 27 to 45; sequence SIRNFLIYVALLRVTPFIL.

It belongs to the Tom5 family. In terms of assembly, forms part of the preprotein translocase complex of the outer mitochondrial membrane (TOM complex) which consists of at least 7 different proteins (TOMM5, TOMM6, TOMM7, TOMM20, TOMM22, TOMM40 and TOMM70).

It is found in the mitochondrion outer membrane. This chain is Mitochondrial import receptor subunit TOM5 homolog, found in Bos taurus (Bovine).